Reading from the N-terminus, the 208-residue chain is MLQQDSNDDTEDVSLFDAEEETTNRPKKSRIRHPVASFFHLFFRVSAIIVYLLCELFSSSFIACMVTIILLLSCDFWAVKNVTGRLMVGLRWWNHIDEDGKSHWVFESRKASPQEGKTVSEAESRIFWLGLVACPVLWVVFAFSALFSFRVKWLAVVIMGVVLQGANLYGYIRCKVGSRKNLTSMATTYLGRQFLRQTTGDTQTSSGE.

The residue at position 1 (Met1) is an N-acetylmethionine. Residues 1 to 21 (MLQQDSNDDTEDVSLFDAEEE) are compositionally biased toward acidic residues. The segment at 1 to 27 (MLQQDSNDDTEDVSLFDAEEETTNRPK) is disordered. Transmembrane regions (helical) follow at residues 34–53 (PVASFFHLFFRVSAIIVYLL), 54–72 (CELFSSSFIACMVTIILLL), 126–146 (IFWLGLVACPVLWVVFAFSAL), and 152–172 (KWLAVVIMGVVLQGANLYGYI).

This sequence belongs to the TVP23 family.

Its subcellular location is the membrane. The chain is Golgi apparatus membrane protein TVP23 homolog B (TVP23B) from Bos taurus (Bovine).